Here is a 1369-residue protein sequence, read N- to C-terminus: Neurofascin (1369 aa).

The N-terminal stretch at 1–25 (MVLHSHQLTYAGIAFALCLHHLISA) is a signal peptide. Over 26–1235 (IEVPLDSNIQ…NHVDIATQGW (1210 aa)) the chain is Extracellular. Ig-like C2-type domains follow at residues 42–138 (PTIT…LQVS) and 144–231 (PKEK…NPYT). 2 disulfides stabilise this stretch: C64/C119 and C163/C214. N241, N247, and N323 each carry an N-linked (GlcNAc...) asparagine glycan. Ig-like C2-type domains lie at 262–350 (PSFM…ISVR), 355–442 (PYWL…AFVS), 448–535 (PRIL…VRLE), and 539–626 (PTRI…AYLT). Disulfide bonds link C286–C334 and C376–C426. Residues N427, N464, and N501 are each glycosylated (N-linked (GlcNAc...) asparagine). Cystine bridges form between C470/C519 and C561/C610. 4 Fibronectin type-III domains span residues 645–740 (RPRD…TSGA), 745–838 (NPTG…SGED), 843–945 (APTD…TPEG), and 949–1057 (SPRY…TPAS). N-linked (GlcNAc...) asparagine glycosylation occurs at N692. A compositionally biased stretch (polar residues) spans 730–739 (MPSERYQTSG). The segment at 730–753 (MPSERYQTSGARPEINPTGVQGAG) is disordered. N-linked (GlcNAc...) asparagine glycosylation is found at N767, N793, N853, N994, and N1009. The tract at residues 1078-1097 (TTATPTTETPPTEIPTTAIP) is disordered. N-linked (GlcNAc...) asparagine glycosylation is found at N1133, N1150, N1156, and N1171. The Fibronectin type-III 5 domain maps to 1133-1222 (NGSSIWDIRA…SYITFTTSSA (90 aa)). Residues 1236–1256 (FIGLMCAIALLVLILLIVCFI) traverse the membrane as a helical segment. The Cytoplasmic portion of the chain corresponds to 1257 to 1369 (KRSRGGKYPV…SPVNAIYSLA (113 aa)). Composition is skewed to basic and acidic residues over residues 1266 to 1282 (VRDN…KNVE) and 1289 to 1298 (RSLESDEDNK). The tract at residues 1266–1369 (VRDNKDEHLN…SPVNAIYSLA (104 aa)) is disordered. Residues 1300–1313 (LPNSQTSLDGTIKQ) are compositionally biased toward polar residues.

Belongs to the immunoglobulin superfamily. L1/neurofascin/NgCAM family. Post-translationally, N-glycosylated and O-glycosylated. In terms of processing, may be proteolytically cleaved at Arg-636.

Its subcellular location is the cell membrane. Functionally, cell adhesion, ankyrin-binding protein which may be involved in neurite extension, axonal guidance, synaptogenesis, myelination and neuron-glial cell interactions. The sequence is that of Neurofascin (NFASC) from Gallus gallus (Chicken).